Here is a 503-residue protein sequence, read N- to C-terminus: Potassium voltage-gated channel subfamily V member 1 (503 aa).

The Cytoplasmic segment spans residues 1–213; the sequence is MELLPPRGRA…EKPGSCTAAR (213 aa). Residues 214–234 traverse the membrane as a helical segment; it reads IFGVISIIFVAVSIVNMALMS. Residues 235 to 246 are Extracellular-facing; that stretch reads AELSWLDPQLLE. Residues 247–267 traverse the membrane as a helical segment; that stretch reads ILEYVCISWFTGEFVLRFLCV. The Cytoplasmic segment spans residues 268–279; the sequence is RDRCRFLRKVPN. The chain crosses the membrane as a helical span at residues 280-300; it reads IIDLLAILPFYITLLVESLSG. The Extracellular segment spans residues 301-312; the sequence is SQTTQELENVGR. The helical; Voltage-sensor transmembrane segment at 313–334 threads the bilayer; it reads IVQVLRLLRALRMLKLGRHSTG. The Cytoplasmic segment spans residues 335-348; the sequence is LRSLGMTITQCYEE. The chain crosses the membrane as a helical span at residues 349-369; sequence VGLLLLFLSVGISIFSTVEYF. A Selectivity filter motif is present at residues 395–400; sequence TVGYGD. The chain crosses the membrane as a helical span at residues 410–430; that stretch reads IVAFMCILSGILVLALPIAII. Residues 431–503 are Cytoplasmic-facing; it reads NDRFSACYFT…RSSGGDDFWF (73 aa).

This sequence belongs to the potassium channel family. V (TC 1.A.1.2) subfamily. Kv8.1/KCNV1 sub-subfamily. As to quaternary structure, heteromultimer with KCNB1 and KCNB2. Interacts with KCNC4 and KCND1.

Its subcellular location is the cell membrane. Functionally, potassium channel subunit that does not form functional channels by itself. Modulates KCNB1 and KCNB2 channel activity by shifting the threshold for inactivation to more negative values and by slowing the rate of inactivation. Can down-regulate the channel activity of KCNB1, KCNB2, KCNC4 and KCND1, possibly by trapping them in intracellular membranes. The polypeptide is Potassium voltage-gated channel subfamily V member 1 (KCNV1) (Bos taurus (Bovine)).